The chain runs to 282 residues: uncharacterized protein (282 aa).

An HTH rpiR-type domain is found at 1 to 77 (MNGLLRIRQR…LALSEALASQ (77 aa)). Residues 37–56 (SQQLANEAGVSQSSVVKFAQ) constitute a DNA-binding region (H-T-H motif). Residues 125–265 (CVTMLRSARR…FIALIQQDLE (141 aa)) enclose the SIS domain.

This is an uncharacterized protein from Escherichia coli (strain K12).